Here is a 118-residue protein sequence, read N- to C-terminus: Acetylcholine receptor subunit beta (118 aa).

The N-terminal stretch at 1–15 (APTVALLLLCALCSA) is a signal peptide.

It belongs to the ligand-gated ion channel (TC 1.A.9) family. Acetylcholine receptor (TC 1.A.9.1) subfamily. Beta-1/CHRNB1 sub-subfamily. Pentamer of two alpha chains, and one each of the beta, delta, and gamma chains.

The protein resides in the postsynaptic cell membrane. The protein localises to the cell membrane. It carries out the reaction K(+)(in) = K(+)(out). The catalysed reaction is Na(+)(in) = Na(+)(out). After binding acetylcholine, the AChR responds by an extensive change in conformation that affects all subunits and leads to opening of an ion-conducting channel across the plasma membrane. This chain is Acetylcholine receptor subunit beta (CHRNB1), found in Gallus gallus (Chicken).